The primary structure comprises 102 residues: ATP-dependent Clp protease adapter protein ClpS (102 aa).

The protein belongs to the ClpS family. Binds to the N-terminal domain of the chaperone ClpA.

Its function is as follows. Involved in the modulation of the specificity of the ClpAP-mediated ATP-dependent protein degradation. In Shewanella putrefaciens (strain CN-32 / ATCC BAA-453), this protein is ATP-dependent Clp protease adapter protein ClpS.